Consider the following 423-residue polypeptide: D-tagatose-1,6-bisphosphate aldolase subunit GatZ (423 aa).

It belongs to the GatZ/KbaZ family. GatZ subfamily. Forms a complex with GatY.

It functions in the pathway carbohydrate metabolism; D-tagatose 6-phosphate degradation; D-glyceraldehyde 3-phosphate and glycerone phosphate from D-tagatose 6-phosphate: step 2/2. Component of the tagatose-1,6-bisphosphate aldolase GatYZ that is required for full activity and stability of the Y subunit. Could have a chaperone-like function for the proper and stable folding of GatY. When expressed alone, GatZ does not show any aldolase activity. Is involved in the catabolism of galactitol. The chain is D-tagatose-1,6-bisphosphate aldolase subunit GatZ from Salmonella gallinarum (strain 287/91 / NCTC 13346).